A 555-amino-acid polypeptide reads, in one-letter code: Urocanate hydratase (555 aa).

Residues 51–52 (GG), Gln129, 175–177 (GMG), Glu195, 262–266 (QTSAH), 272–273 (YL), and Tyr321 each bind NAD(+). Residue Cys409 is part of the active site. Gly491 lines the NAD(+) pocket.

Belongs to the urocanase family. NAD(+) serves as cofactor.

It is found in the cytoplasm. The catalysed reaction is 4-imidazolone-5-propanoate = trans-urocanate + H2O. The protein operates within amino-acid degradation; L-histidine degradation into L-glutamate; N-formimidoyl-L-glutamate from L-histidine: step 2/3. In terms of biological role, catalyzes the conversion of urocanate to 4-imidazolone-5-propionate. The protein is Urocanate hydratase of Xanthomonas euvesicatoria pv. vesicatoria (strain 85-10) (Xanthomonas campestris pv. vesicatoria).